Here is a 149-residue protein sequence, read N- to C-terminus: MKSTLRISLKAGERIFINGAVLRVDRKVALEFLNDVTFLLENHVLQPEGATTPLRQLYFIAQMILINPEGKDHSTAMFRKSITMLLTCFKNEEILAELKRIDALVSTGRAFDALKAIRGLYAIEDNILNNHELPPTMVEQIRREIAPWR.

The protein belongs to the FlbT family.

In terms of biological role, has a post-transcriptional repressor function in flagellum biogenesis. Associates with the 5'-UTR of fljK mRNA and promotes its degradation. In Rhizobium etli (strain CIAT 652), this protein is Probable flagellum biosynthesis repressor protein FlbT.